A 350-amino-acid chain; its full sequence is Biotin synthase (350 aa).

In terms of domain architecture, Radical SAM core spans 38–265; the sequence is NHVQVSTLLS…MSAVRLSAGR (228 aa). Residues Cys53, Cys57, and Cys60 each coordinate [4Fe-4S] cluster. [2Fe-2S] cluster-binding residues include Cys97, Cys128, Cys188, and Arg260.

This sequence belongs to the radical SAM superfamily. Biotin synthase family. As to quaternary structure, homodimer. [4Fe-4S] cluster serves as cofactor. The cofactor is [2Fe-2S] cluster.

The enzyme catalyses (4R,5S)-dethiobiotin + (sulfur carrier)-SH + 2 reduced [2Fe-2S]-[ferredoxin] + 2 S-adenosyl-L-methionine = (sulfur carrier)-H + biotin + 2 5'-deoxyadenosine + 2 L-methionine + 2 oxidized [2Fe-2S]-[ferredoxin]. The protein operates within cofactor biosynthesis; biotin biosynthesis; biotin from 7,8-diaminononanoate: step 2/2. Functionally, catalyzes the conversion of dethiobiotin (DTB) to biotin by the insertion of a sulfur atom into dethiobiotin via a radical-based mechanism. The protein is Biotin synthase of Vibrio atlanticus (strain LGP32) (Vibrio splendidus (strain Mel32)).